We begin with the raw amino-acid sequence, 353 residues long: Phospho-furanose lactonase (353 aa).

Residues H25, H27, K153, H186, and H214 each coordinate Zn(2+). K153 carries the post-translational modification N6-carboxylysine. 244-245 (KY) lines the substrate pocket. D272 lines the Zn(2+) pocket. 275-278 (RILY) serves as a coordination point for substrate.

Belongs to the metallo-dependent hydrolases superfamily. Phosphotriesterase family. Requires Zn(2+) as cofactor.

The enzyme catalyses a 1,4-lactone + H2O = a 4-hydroxyacid + H(+). It catalyses the reaction D-xylono-1,4-lactone 5-phosphate + H2O = 5-phospho-D-xylonate + H(+). It carries out the reaction L-arabino-1,4-lactone 5-phosphate + H2O = 5-phospho-L-arabinonate + H(+). In terms of biological role, catalyzes the hydrolysis of D-xylono-1,4-lactone-5-phosphate and L-arabino-1,4-lactone-5-phosphate. Also able to hydrolyze carboxy 1,4-lactones. This Mycoplasmopsis agalactiae (strain NCTC 10123 / CIP 59.7 / PG2) (Mycoplasma agalactiae) protein is Phospho-furanose lactonase.